The chain runs to 202 residues: Dephospho-CoA kinase (202 aa).

The 197-residue stretch at 6-202 (KVSITGDLSS…EYFYALKGAL (197 aa)) folds into the DPCK domain. ATP is bound at residue 14-19 (SSGKTE).

This sequence belongs to the CoaE family.

The protein localises to the cytoplasm. The catalysed reaction is 3'-dephospho-CoA + ATP = ADP + CoA + H(+). Its pathway is cofactor biosynthesis; coenzyme A biosynthesis; CoA from (R)-pantothenate: step 5/5. In terms of biological role, catalyzes the phosphorylation of the 3'-hydroxyl group of dephosphocoenzyme A to form coenzyme A. The polypeptide is Dephospho-CoA kinase (Chlamydia felis (strain Fe/C-56) (Chlamydophila felis)).